The primary structure comprises 745 residues: Jacalin-related lectin 4 (745 aa).

5 Jacalin-type lectin domains span residues 2–148, 151–294, 307–448, 451–594, and 601–744; these read AQKL…YFAP, PTKF…YFSP, AEKL…YFVT, PTKF…YFSR, and AETL…YVMP.

Belongs to the jacalin lectin family.

This chain is Jacalin-related lectin 4 (JAL4), found in Arabidopsis thaliana (Mouse-ear cress).